A 156-amino-acid polypeptide reads, in one-letter code: Cyanate hydratase (156 aa).

Residues Arg96, Glu99, and Ser122 contribute to the active site.

It belongs to the cyanase family.

It catalyses the reaction cyanate + hydrogencarbonate + 3 H(+) = NH4(+) + 2 CO2. Functionally, catalyzes the reaction of cyanate with bicarbonate to produce ammonia and carbon dioxide. This chain is Cyanate hydratase, found in Pseudomonas putida (strain W619).